Consider the following 385-residue polypeptide: Chorismate synthase (385 aa).

Arginine 40 and arginine 46 together coordinate NADP(+). FMN is bound by residues 128–130, 248–249, glycine 293, 308–312, and arginine 334; these read RAS, QA, and KAIPS.

The protein belongs to the chorismate synthase family. Homotetramer. It depends on FMNH2 as a cofactor.

The enzyme catalyses 5-O-(1-carboxyvinyl)-3-phosphoshikimate = chorismate + phosphate. Its pathway is metabolic intermediate biosynthesis; chorismate biosynthesis; chorismate from D-erythrose 4-phosphate and phosphoenolpyruvate: step 7/7. Its function is as follows. Catalyzes the anti-1,4-elimination of the C-3 phosphate and the C-6 proR hydrogen from 5-enolpyruvylshikimate-3-phosphate (EPSP) to yield chorismate, which is the branch point compound that serves as the starting substrate for the three terminal pathways of aromatic amino acid biosynthesis. This reaction introduces a second double bond into the aromatic ring system. The protein is Chorismate synthase of Endomicrobium trichonymphae.